The sequence spans 201 residues: Small ribosomal subunit protein uS4c (201 aa).

Positions 20–44 (GLTSKRPKAGSDLRNQSRSGKKSQY) are disordered. In terms of domain architecture, S4 RNA-binding spans 89 to 152 (MRLDNILFRL…NSRTLVQNLL (64 aa)).

It belongs to the universal ribosomal protein uS4 family. Part of the 30S ribosomal subunit. Contacts protein S5. The interaction surface between S4 and S5 is involved in control of translational fidelity.

The protein resides in the plastid. The protein localises to the chloroplast. In terms of biological role, one of the primary rRNA binding proteins, it binds directly to 16S rRNA where it nucleates assembly of the body of the 30S subunit. Its function is as follows. With S5 and S12 plays an important role in translational accuracy. The polypeptide is Small ribosomal subunit protein uS4c (rps4) (Barbarea verna (Land cress)).